The following is a 508-amino-acid chain: Photosystem II CP47 reaction center protein (508 aa).

The next 6 membrane-spanning stretches (helical) occupy residues 21–36 (SVHIMHTALVAGWAGS), 101–115 (IVLSGLCFLAAIWHW), 140–156 (GIHLFLSGVACFGFGAF), 203–218 (IAAGTLGILAGLFHLS), 237–252 (VLSSSIAAVFFAAFVV), and 457–472 (SFALLFFFGHIWHGAR).

The protein belongs to the PsbB/PsbC family. PsbB subfamily. As to quaternary structure, PSII is composed of 1 copy each of membrane proteins PsbA, PsbB, PsbC, PsbD, PsbE, PsbF, PsbH, PsbI, PsbJ, PsbK, PsbL, PsbM, PsbT, PsbX, PsbY, PsbZ, Psb30/Ycf12, at least 3 peripheral proteins of the oxygen-evolving complex and a large number of cofactors. It forms dimeric complexes. Requires Binds multiple chlorophylls. PSII binds additional chlorophylls, carotenoids and specific lipids. as cofactor.

It is found in the plastid. The protein resides in the chloroplast thylakoid membrane. One of the components of the core complex of photosystem II (PSII). It binds chlorophyll and helps catalyze the primary light-induced photochemical processes of PSII. PSII is a light-driven water:plastoquinone oxidoreductase, using light energy to abstract electrons from H(2)O, generating O(2) and a proton gradient subsequently used for ATP formation. The polypeptide is Photosystem II CP47 reaction center protein (Pelargonium hortorum (Common geranium)).